The chain runs to 118 residues: Holin-like protein CidA 2 (118 aa).

Helical transmembrane passes span 4 to 26 (VTLL…IQGV), 33 to 52 (GSLI…VLPL), 62 to 84 (LIVF…GSFL), and 91 to 113 (IFLL…SQLL).

This sequence belongs to the CidA/LrgA family. CidA subfamily.

The protein resides in the cell membrane. Its function is as follows. Increases the activity of extracellular murein hydrolases possibly by mediating their export via hole formation. Inhibited by the antiholin-like proteins LrgAB. In an unstressed cell, the LrgAB products probably inhibit the function of the CidA protein. When a cell is stressed by the addition of antibiotics or by other factors in the environment, CidA possibly oligomerizes within the bacterial cell membrane, creating lesions that disrupt the proton motive force, which in turn results in loss of cell viability. These lesions are also hypothesized to regulate the subsequent cell lysis by either allowing the murein hydrolases access to the cell wall substrate and/or regulating their activity by a possible change in the cell wall pH that results from loss of membrane potential. In Bacillus cereus (strain ATCC 14579 / DSM 31 / CCUG 7414 / JCM 2152 / NBRC 15305 / NCIMB 9373 / NCTC 2599 / NRRL B-3711), this protein is Holin-like protein CidA 2 (cidA2).